Here is a 468-residue protein sequence, read N- to C-terminus: Tripartite motif-containing protein 75 (468 aa).

An RING-type zinc finger spans residues 16–57; that stretch reads CSICLDYLSDPVTIECGHNFCRSCIQQSWLDLQELFPCPVCR. A B box-type zinc finger spans residues 92–133; sequence EETTLCEKHNQPLSVFCKEDLMVLCPLCTQPPDHQGHHVRPI. Zn(2+)-binding residues include cysteine 97, histidine 100, cysteine 119, and histidine 125. The stretch at 170 to 222 forms a coiled coil; that stretch reads LELREMVENQRQELSSEFEHLNQFLDREQQAVLSRLAEEEKDNQQKLSANITA. Residues 276-468 enclose the B30.2/SPRY domain; that stretch reads CSFPPQYSAL…LRICTGTVCE (193 aa).

Belongs to the TRIM/RBCC family.

The protein resides in the cytoplasm. Its subcellular location is the cytoskeleton. It localises to the spindle. Functionally, may play a role in female meiosis. This chain is Tripartite motif-containing protein 75, found in Homo sapiens (Human).